The chain runs to 362 residues: Chorismate synthase (362 aa).

An NADP(+)-binding site is contributed by Arg47. FMN-binding positions include 124-126 (RSS), Gly286, 301-305 (KPTAT), and Arg327.

The protein belongs to the chorismate synthase family. In terms of assembly, homotetramer. FMNH2 serves as cofactor.

The enzyme catalyses 5-O-(1-carboxyvinyl)-3-phosphoshikimate = chorismate + phosphate. The protein operates within metabolic intermediate biosynthesis; chorismate biosynthesis; chorismate from D-erythrose 4-phosphate and phosphoenolpyruvate: step 7/7. Its function is as follows. Catalyzes the anti-1,4-elimination of the C-3 phosphate and the C-6 proR hydrogen from 5-enolpyruvylshikimate-3-phosphate (EPSP) to yield chorismate, which is the branch point compound that serves as the starting substrate for the three terminal pathways of aromatic amino acid biosynthesis. This reaction introduces a second double bond into the aromatic ring system. In Synechococcus sp. (strain ATCC 27144 / PCC 6301 / SAUG 1402/1) (Anacystis nidulans), this protein is Chorismate synthase.